An 859-amino-acid polypeptide reads, in one-letter code: Heterogeneous nuclear ribonucleoprotein U-like protein 1 (859 aa).

The tract at residues 1-103 (MDVRRLKVNE…GPDGHYVMDN (103 aa)) is necessary for interaction with HRMT1L1. The SAP domain maps to 3–37 (VRRLKVNELREELQRRGLDTRGLKAELAERLLAAL). Residues 36 to 131 (ALEAEEPEDE…SSYDRRPLDM (96 aa)) form a disordered region. The span at 38 to 54 (EAEEPEDERELEADDDP) shows a compositional bias: acidic residues. The span at 77–88 (QPPPPGLQPHPE) shows a compositional bias: pro residues. Lys-117 participates in a covalent cross-link: Glycyl lysine isopeptide (Lys-Gly) (interchain with G-Cter in SUMO1); alternate. Lys-117 participates in a covalent cross-link: Glycyl lysine isopeptide (Lys-Gly) (interchain with G-Cter in SUMO2); alternate. Residues 118–130 (QENESSYDRRPLD) are compositionally biased toward basic and acidic residues. A Glycyl lysine isopeptide (Lys-Gly) (interchain with G-Cter in SUMO1); alternate cross-link involves residue Lys-143. Residue Lys-143 forms a Glycyl lysine isopeptide (Lys-Gly) (interchain with G-Cter in SUMO2); alternate linkage. Residues 146-206 (MKQEAPPSFL…QPPAEEDEDD (61 aa)) are disordered. Glycyl lysine isopeptide (Lys-Gly) (interchain with G-Cter in SUMO2) cross-links involve residues Lys-147 and Lys-163. A compositionally biased stretch (basic and acidic residues) spans 174–193 (RPFEENRGRGYFEHREDRRG). One can recognise a B30.2/SPRY domain in the interval 192–389 (RGRSPQPPAE…VEFNFGQRAE (198 aa)). Ser-195 is modified (phosphoserine). Residue Thr-210 is modified to Phosphothreonine. Residues 214–859 (IDTYNCDLHF…GSTQGGTSTQ (646 aa)) are necessary for interaction with TP53. Glycyl lysine isopeptide (Lys-Gly) (interchain with G-Cter in SUMO2) cross-links involve residues Lys-271 and Lys-450. The tract at residues 457–595 (NAIMDKMRVM…EEADKLVRQY (139 aa)) is necessary for interaction with BRD7 and transcriptional activation. Ser-513 is modified (phosphoserine). Lys-540 participates in a covalent cross-link: Glycyl lysine isopeptide (Lys-Gly) (interchain with G-Cter in SUMO2). A compositionally biased stretch (basic and acidic residues) spans 595–612 (YNEEGRKAGPPPEKRFDS). A disordered region spans residues 595–814 (YNEEGRKAGP…PPTAQTYPQP (220 aa)). 5 tandem repeats follow at residues 613–615 (RGG), 620–622 (RGG), 639–641 (RGG), 645–647 (RGG), and 659–661 (RGG). Composition is skewed to gly residues over residues 613–626 (RGGGFRGRGGGGGF) and 634–670 (PPGGNRGGFQNRGGGGGSGGGGGNYRGGFNRSGGGGY). Residues 613-661 (RGGGFRGRGGGGGFQRYDNRGPPGGNRGGFQNRGGGGGSGGGGGNYRGG) are 5 X 3 AA repeats of R-G-G. Residues 613-661 (RGGGFRGRGGGGGFQRYDNRGPPGGNRGGFQNRGGGGGSGGGGGNYRGG) form a necessary for transcription repression region. Position 639 is an asymmetric dimethylarginine (Arg-639). Arg-645 and Arg-659 each carry asymmetric dimethylarginine; alternate. Omega-N-methylarginine; alternate occurs at positions 645 and 659. Residues Arg-664 and Arg-674 each carry the omega-N-methylarginine modification. Low complexity predominate over residues 671 to 696 (NQNRWGNNNRDNNNSNNRGNYNRAPQ). Residues 697–720 (QQPPPQQPPPPQPPPQQPPPPPSY) are compositionally biased toward pro residues. Phosphoserine is present on Ser-721. A compositionally biased stretch (polar residues) spans 728–744 (GASSYNKNSNIPGSSAN). Positions 745–775 (TSTPTVSSYTPPQPSYSQPPYNQGGYTQGYT) are enriched in low complexity. 2 stretches are compositionally biased toward pro residues: residues 776–786 (APPPPPPPPPA) and 796–807 (NPAPYTPPPPPT).

In terms of assembly, interacts with BRD7, PRMT2, TP53 and NXF1. Associates with histones and BRD7. Methylated.

It localises to the nucleus. Functionally, acts as a basic transcriptional regulator. Represses basic transcription driven by several virus and cellular promoters. When associated with BRD7, activates transcription of glucocorticoid-responsive promoter in the absence of ligand-stimulation. Also plays a role in mRNA processing and transport. Binds avidly to poly(G) and poly(C) RNA homopolymers in vitro. The protein is Heterogeneous nuclear ribonucleoprotein U-like protein 1 (Hnrnpul1) of Mus musculus (Mouse).